A 50-amino-acid chain; its full sequence is Inter-alpha-trypsin inhibitor heavy chain H2 (50 aa).

Belongs to the ITIH family. As to quaternary structure, I-alpha-I plasma protease inhibitors are assembled from one or two heavy chains (HC) and one light chain, bikunin. Inter-alpha-inhibitor (I-alpha-I) is composed of ITIH1/HC1, ITIH2/HC2 and bikunin. In terms of processing, phosphorylated by FAM20C in the extracellular medium.

The protein localises to the secreted. Functionally, may act as a carrier of hyaluronan in serum or as a binding protein between hyaluronan and other matrix protein, including those on cell surfaces in tissues to regulate the localization, synthesis and degradation of hyaluronan which are essential to cells undergoing biological processes. In Bos taurus (Bovine), this protein is Inter-alpha-trypsin inhibitor heavy chain H2 (ITIH2).